The following is a 356-amino-acid chain: Glycerol-3-phosphate dehydrogenase [NAD(P)+] (356 aa).

Residues Trp-12, Arg-32, Arg-33, and Lys-117 each contribute to the NADPH site. Residues Lys-117, Gly-151, and Ser-153 each coordinate sn-glycerol 3-phosphate. Ala-155 is a binding site for NADPH. Residues Lys-206, Asp-265, Arg-276, and Asn-277 each contribute to the sn-glycerol 3-phosphate site. The Proton acceptor role is filled by Lys-206. Arg-276 is an NADPH binding site. Positions 309 and 311 each coordinate NADPH.

The protein belongs to the NAD-dependent glycerol-3-phosphate dehydrogenase family.

It localises to the cytoplasm. It carries out the reaction sn-glycerol 3-phosphate + NAD(+) = dihydroxyacetone phosphate + NADH + H(+). It catalyses the reaction sn-glycerol 3-phosphate + NADP(+) = dihydroxyacetone phosphate + NADPH + H(+). It participates in membrane lipid metabolism; glycerophospholipid metabolism. In terms of biological role, catalyzes the reduction of the glycolytic intermediate dihydroxyacetone phosphate (DHAP) to sn-glycerol 3-phosphate (G3P), the key precursor for phospholipid synthesis. The polypeptide is Glycerol-3-phosphate dehydrogenase [NAD(P)+] (Treponema pallidum (strain Nichols)).